A 253-amino-acid chain; its full sequence is Testis-expressed protein 47 (253 aa).

As to expression, testis-specific.

The polypeptide is Testis-expressed protein 47 (Homo sapiens (Human)).